We begin with the raw amino-acid sequence, 398 residues long: uncharacterized protein (398 aa).

The disordered stretch occupies residues 313-398 (KTIKSSGSKT…TSKSIKYYEV (86 aa)). 2 stretches are compositionally biased toward low complexity: residues 314–333 (TIKSSGSKTSKSIGSKTNKS) and 343–398 (GSKT…YYEV).

This is an uncharacterized protein from Acanthamoeba polyphaga mimivirus (APMV).